A 294-amino-acid polypeptide reads, in one-letter code: Protease HtpX homolog (294 aa).

Helical transmembrane passes span Val12–Phe32 and Ser34–Trp54. Zn(2+) is bound at residue His138. Residue Glu139 is part of the active site. His142 serves as a coordination point for Zn(2+). Transmembrane regions (helical) follow at residues Ser152–Gly172 and Leu188–Ile208. Zn(2+) is bound at residue Glu213.

It belongs to the peptidase M48B family. Zn(2+) serves as cofactor.

The protein resides in the cell membrane. The protein is Protease HtpX homolog of Kineococcus radiotolerans (strain ATCC BAA-149 / DSM 14245 / SRS30216).